The primary structure comprises 698 residues: DNA-directed RNA polymerase subunit beta' (698 aa).

Residues cysteine 69, cysteine 71, cysteine 89, and cysteine 92 each contribute to the Zn(2+) site. Residues aspartate 509, aspartate 511, and aspartate 513 each contribute to the Mg(2+) site.

Belongs to the RNA polymerase beta' chain family. RpoC1 subfamily. In terms of assembly, in plastids the minimal PEP RNA polymerase catalytic core is composed of four subunits: alpha, beta, beta', and beta''. When a (nuclear-encoded) sigma factor is associated with the core the holoenzyme is formed, which can initiate transcription. Requires Mg(2+) as cofactor. The cofactor is Zn(2+).

It is found in the plastid. The protein localises to the chloroplast. It carries out the reaction RNA(n) + a ribonucleoside 5'-triphosphate = RNA(n+1) + diphosphate. Functionally, DNA-dependent RNA polymerase catalyzes the transcription of DNA into RNA using the four ribonucleoside triphosphates as substrates. This chain is DNA-directed RNA polymerase subunit beta', found in Cryptomeria japonica (Japanese cedar).